Reading from the N-terminus, the 270-residue chain is tRNA pseudouridine synthase A (270 aa).

The Nucleophile role is filled by Asp-60. Tyr-118 provides a ligand contact to substrate.

The protein belongs to the tRNA pseudouridine synthase TruA family. In terms of assembly, homodimer.

The enzyme catalyses uridine(38/39/40) in tRNA = pseudouridine(38/39/40) in tRNA. Formation of pseudouridine at positions 38, 39 and 40 in the anticodon stem and loop of transfer RNAs. This is tRNA pseudouridine synthase A from Salmonella agona (strain SL483).